A 254-amino-acid polypeptide reads, in one-letter code: Probable phosphatase Sbal223_2880 (254 aa).

9 residues coordinate Zn(2+): histidine 8, histidine 10, histidine 16, histidine 41, glutamate 74, histidine 102, histidine 132, aspartate 193, and histidine 195.

Belongs to the PHP family. Zn(2+) serves as cofactor.

The chain is Probable phosphatase Sbal223_2880 from Shewanella baltica (strain OS223).